The chain runs to 302 residues: 4-hydroxy-tetrahydrodipicolinate synthase (302 aa).

Thr55 is a binding site for pyruvate. Tyr144 (proton donor/acceptor) is an active-site residue. Lys172 acts as the Schiff-base intermediate with substrate in catalysis. Position 214 (Val214) interacts with pyruvate.

The protein belongs to the DapA family. As to quaternary structure, homotetramer; dimer of dimers.

Its subcellular location is the cytoplasm. The catalysed reaction is L-aspartate 4-semialdehyde + pyruvate = (2S,4S)-4-hydroxy-2,3,4,5-tetrahydrodipicolinate + H2O + H(+). The protein operates within amino-acid biosynthesis; L-lysine biosynthesis via DAP pathway; (S)-tetrahydrodipicolinate from L-aspartate: step 3/4. Functionally, catalyzes the condensation of (S)-aspartate-beta-semialdehyde [(S)-ASA] and pyruvate to 4-hydroxy-tetrahydrodipicolinate (HTPA). The chain is 4-hydroxy-tetrahydrodipicolinate synthase from Synechococcus sp. (strain CC9605).